Reading from the N-terminus, the 170-residue chain is Odorant-binding protein 2b (170 aa).

The N-terminal stretch at 1 to 15 (MKTLFLGVTLGLAAA) is a signal peptide. Cys-74 and Cys-166 are joined by a disulfide.

It belongs to the calycin superfamily. Lipocalin family. As to expression, strongly expressed in genital sphere organs such as the prostate and mammary glands.

It localises to the secreted. In terms of biological role, probably binds and transports small hydrophobic volatile molecules. In Homo sapiens (Human), this protein is Odorant-binding protein 2b (OBP2B).